The primary structure comprises 72 residues: Translation initiation factor IF-1 (72 aa).

The S1-like domain occupies 2–72 (AKEDCIEMQG…NKGRIIFRSR (71 aa)).

Belongs to the IF-1 family. Component of the 30S ribosomal translation pre-initiation complex which assembles on the 30S ribosome in the order IF-2 and IF-3, IF-1 and N-formylmethionyl-tRNA(fMet); mRNA recruitment can occur at any time during PIC assembly.

It localises to the cytoplasm. Its function is as follows. One of the essential components for the initiation of protein synthesis. Stabilizes the binding of IF-2 and IF-3 on the 30S subunit to which N-formylmethionyl-tRNA(fMet) subsequently binds. Helps modulate mRNA selection, yielding the 30S pre-initiation complex (PIC). Upon addition of the 50S ribosomal subunit IF-1, IF-2 and IF-3 are released leaving the mature 70S translation initiation complex. In Pasteurella multocida (strain Pm70), this protein is Translation initiation factor IF-1.